The chain runs to 387 residues: Succinyl-diaminopimelate desuccinylase (387 aa).

H74 contributes to the Zn(2+) binding site. D76 is an active-site residue. D107 is a binding site for Zn(2+). The active-site Proton acceptor is the E142. Zn(2+)-binding residues include E143, E171, and H360.

It belongs to the peptidase M20A family. DapE subfamily. As to quaternary structure, homodimer. The cofactor is Zn(2+). It depends on Co(2+) as a cofactor.

The enzyme catalyses N-succinyl-(2S,6S)-2,6-diaminopimelate + H2O = (2S,6S)-2,6-diaminopimelate + succinate. It participates in amino-acid biosynthesis; L-lysine biosynthesis via DAP pathway; LL-2,6-diaminopimelate from (S)-tetrahydrodipicolinate (succinylase route): step 3/3. Its function is as follows. Catalyzes the hydrolysis of N-succinyl-L,L-diaminopimelic acid (SDAP), forming succinate and LL-2,6-diaminopimelate (DAP), an intermediate involved in the bacterial biosynthesis of lysine and meso-diaminopimelic acid, an essential component of bacterial cell walls. The protein is Succinyl-diaminopimelate desuccinylase of Rhodopseudomonas palustris (strain TIE-1).